The primary structure comprises 1029 residues: U2 snRNP-associated SURP motif-containing protein (1029 aa).

Disordered regions lie at residues Met-1 to Glu-110 and Val-141 to Thr-273. Residue Ala-2 is modified to N-acetylalanine. Over residues Gly-7–Asn-16 the composition is skewed to polar residues. Over residues Thr-45–Asn-54 the composition is skewed to basic residues. Basic and acidic residues predominate over residues Tyr-55–Leu-64. Ser-67 carries the phosphoserine modification. Lys-80 participates in a covalent cross-link: Glycyl lysine isopeptide (Lys-Gly) (interchain with G-Cter in SUMO2). Residues Ala-92–Leu-121 adopt a coiled-coil conformation. Composition is skewed to basic and acidic residues over residues Ser-97–Glu-110 and Ala-144–Gly-155. Residues Lys-145 and Lys-168 each participate in a glycyl lysine isopeptide (Lys-Gly) (interchain with G-Cter in SUMO2) cross-link. Positions Asn-169 to Arg-178 are enriched in polar residues. Residues Glu-186 to His-222 show a composition bias toward basic and acidic residues. Positions Leu-192–Glu-232 form a coiled coil. Residue Ser-202 is modified to Phosphoserine. Lys-208 is covalently cross-linked (Glycyl lysine isopeptide (Lys-Gly) (interchain with G-Cter in SUMO2)). Ser-236 carries the phosphoserine modification. The segment covering Asp-239 to Ser-249 has biased composition (basic and acidic residues). The 82-residue stretch at Thr-274 to Ala-355 folds into the RRM domain. One copy of the SURP motif repeat lies at Leu-430–Tyr-473. Ser-485 carries the post-translational modification Phosphoserine. Residues Leu-534–Val-679 form the CID domain. The interval Asp-704–Ile-729 is disordered. A Phosphothreonine modification is found at Thr-719. Glycyl lysine isopeptide (Lys-Gly) (interchain with G-Cter in SUMO2) cross-links involve residues Lys-748 and Lys-749. The residue at position 760 (Lys-760) is an N6-acetyllysine; alternate. Lys-760 is covalently cross-linked (Glycyl lysine isopeptide (Lys-Gly) (interchain with G-Cter in SUMO2); alternate). Disordered regions lie at residues Lys-778–Arg-841 and Gln-855–His-1029. A compositionally biased stretch (acidic residues) spans Glu-786–Thr-806. Residues Ser-788, Ser-800, and Ser-811 each carry the phosphoserine modification. 2 stretches are compositionally biased toward basic and acidic residues: residues Lys-810–Arg-841 and Gln-874–Arg-922. Residues Lys-829 and Lys-832 each participate in a glycyl lysine isopeptide (Lys-Gly) (interchain with G-Cter in SUMO2) cross-link. Residues Ser-837–Lys-915 adopt a coiled-coil conformation. Thr-931 carries the post-translational modification Phosphothreonine. Ser-946 and Ser-948 each carry phosphoserine. Residues Lys-950 to Lys-980 are compositionally biased toward basic and acidic residues. Over residues Thr-991–His-1029 the composition is skewed to basic residues.

The protein belongs to the splicing factor SR family. As to quaternary structure, interacts with ERBB4.

Its subcellular location is the nucleus. The sequence is that of U2 snRNP-associated SURP motif-containing protein (U2surp) from Mus musculus (Mouse).